The sequence spans 488 residues: Probable glycine dehydrogenase (decarboxylating) subunit 2 (488 aa).

N6-(pyridoxal phosphate)lysine is present on K264.

The protein belongs to the GcvP family. C-terminal subunit subfamily. The glycine cleavage system is composed of four proteins: P, T, L and H. In this organism, the P 'protein' is a heterodimer of two subunits. The cofactor is pyridoxal 5'-phosphate.

It catalyses the reaction N(6)-[(R)-lipoyl]-L-lysyl-[glycine-cleavage complex H protein] + glycine + H(+) = N(6)-[(R)-S(8)-aminomethyldihydrolipoyl]-L-lysyl-[glycine-cleavage complex H protein] + CO2. Its function is as follows. The glycine cleavage system catalyzes the degradation of glycine. The P protein binds the alpha-amino group of glycine through its pyridoxal phosphate cofactor; CO(2) is released and the remaining methylamine moiety is then transferred to the lipoamide cofactor of the H protein. This is Probable glycine dehydrogenase (decarboxylating) subunit 2 from Methylococcus capsulatus (strain ATCC 33009 / NCIMB 11132 / Bath).